Reading from the N-terminus, the 515-residue chain is Putative BTB/POZ domain-containing protein At3g49970 (515 aa).

The BTB domain occupies 1 to 63; sequence MLEKLSFLLH…CYDISFEINT (63 aa). One can recognise an NPH3 domain in the interval 149 to 409; the sequence is DWWADDLAVL…NSDSPAPATA (261 aa). Position 350 is a phosphotyrosine (Tyr350). The tract at residues 395 to 417 is disordered; the sequence is QENLSNSDSPAPATAEKTLSPPE. The stretch at 418–452 forms a coiled coil; sequence LSSYKNELSKLNRENQYLKLELLKVKMKFKELEKE. The tract at residues 494–515 is disordered; that stretch reads INPFGLKQGQTKQPKSRRHSIS.

Belongs to the NPH3 family.

The protein operates within protein modification; protein ubiquitination. In terms of biological role, may act as a substrate-specific adapter of an E3 ubiquitin-protein ligase complex (CUL3-RBX1-BTB) which mediates the ubiquitination and subsequent proteasomal degradation of target proteins. The polypeptide is Putative BTB/POZ domain-containing protein At3g49970 (Arabidopsis thaliana (Mouse-ear cress)).